The primary structure comprises 1244 residues: Putative late blight resistance protein homolog R1A-4 (1244 aa).

2 coiled-coil regions span residues 411 to 434 (RYSDSLAFLKNQLQVIQTEFESLQ) and 526 to 548 (PRMNEEIVGFKDVIENLRNQLLN). The NB-ARC domain occupies 527-755 (RMNEEIVGFK…ECWEQVANDL (229 aa)). 560–567 (GMPGLGKT) serves as a coordination point for ATP. 5 LRR repeats span residues 978–1004 (LWNLETLILNRRSVVHKILLPSTVWDM), 1079–1103 (PIRLEILKLYRSNAFKAIPFCISAP), 1127–1150 (LKNLEVLKLYYVEFGDHREWKVSN), 1153–1178 (FPQLKILKLEDVSLMKWIVADDAFPN), and 1213–1237 (ESVVKSAMNIQETQVEDYQNTNFKL).

The protein belongs to the disease resistance NB-LRR family.

The protein localises to the cytoplasm. It localises to the membrane. In terms of biological role, confers resistance to late blight (Phytophthora infestans) races carrying the avirulence gene Avr1. Resistance proteins guard the plant against pathogens that contain an appropriate avirulence protein via an indirect interaction with this avirulence protein. That triggers a defense system including the hypersensitive response, which restricts the pathogen growth. In Solanum demissum (Wild potato), this protein is Putative late blight resistance protein homolog R1A-4 (R1A-4).